Consider the following 255-residue polypeptide: Acetylglutamate kinase (255 aa).

Residues 40–41, Arg-62, and Asn-153 contribute to the substrate site; that span reads GG.

It belongs to the acetylglutamate kinase family. ArgB subfamily.

The protein resides in the cytoplasm. It catalyses the reaction N-acetyl-L-glutamate + ATP = N-acetyl-L-glutamyl 5-phosphate + ADP. The protein operates within amino-acid biosynthesis; L-arginine biosynthesis; N(2)-acetyl-L-ornithine from L-glutamate: step 2/4. Its function is as follows. Catalyzes the ATP-dependent phosphorylation of N-acetyl-L-glutamate. This Bacillus mycoides (strain KBAB4) (Bacillus weihenstephanensis) protein is Acetylglutamate kinase.